A 352-amino-acid chain; its full sequence is Outer membrane protein assembly factor BamC (352 aa).

Residues 1–24 (MAISLQKSTVVKVVGVSLVMLLAA) form the signal peptide. Cysteine 25 is lipidated: N-palmitoyl cysteine. Cysteine 25 carries S-diacylglycerol cysteine lipidation.

The protein belongs to the BamC family. In terms of assembly, part of the Bam complex, which is composed of the outer membrane protein BamA, and four lipoproteins BamB, BamC, BamD and BamE.

The protein resides in the cell outer membrane. In terms of biological role, part of the outer membrane protein assembly complex, which is involved in assembly and insertion of beta-barrel proteins into the outer membrane. In Yersinia pestis, this protein is Outer membrane protein assembly factor BamC.